A 417-amino-acid polypeptide reads, in one-letter code: Glutamyl-tRNA(Gln) amidotransferase subunit D (417 aa).

The Asparaginase/glutaminase domain occupies 73–400; that stretch reads EKVWLLATGG…EEVPRVLTTP (328 aa). Catalysis depends on residues Thr83, Thr157, Asp158, and Lys236.

The protein belongs to the asparaginase 1 family. GatD subfamily. Heterodimer of GatD and GatE.

The enzyme catalyses L-glutamyl-tRNA(Gln) + L-glutamine + ATP + H2O = L-glutaminyl-tRNA(Gln) + L-glutamate + ADP + phosphate + H(+). Its function is as follows. Allows the formation of correctly charged Gln-tRNA(Gln) through the transamidation of misacylated Glu-tRNA(Gln) in organisms which lack glutaminyl-tRNA synthetase. The reaction takes place in the presence of glutamine and ATP through an activated gamma-phospho-Glu-tRNA(Gln). The GatDE system is specific for glutamate and does not act on aspartate. This is Glutamyl-tRNA(Gln) amidotransferase subunit D from Pyrobaculum aerophilum (strain ATCC 51768 / DSM 7523 / JCM 9630 / CIP 104966 / NBRC 100827 / IM2).